A 551-amino-acid chain; its full sequence is Glucose-6-phosphate isomerase (551 aa).

D-glucose 6-phosphate contacts are provided by residues 161–162, 212–217, Gln356, Glu360, His391, and Lys516; these read GS and SKTFTT. The active-site Proton donor is the Glu360. Active-site residues include His391 and Lys516.

The protein belongs to the GPI family. Homodimer.

It is found in the cytoplasm. The protein localises to the cytosol. The enzyme catalyses alpha-D-glucose 6-phosphate = beta-D-fructose 6-phosphate. It participates in carbohydrate degradation; glycolysis; D-glyceraldehyde 3-phosphate and glycerone phosphate from D-glucose: step 2/4. In the cytoplasm, catalyzes the conversion of glucose-6-phosphate to fructose-6-phosphate, the second step in glycolysis, and the reverse reaction during gluconeogenesis. This Agaricus bisporus (White button mushroom) protein is Glucose-6-phosphate isomerase (gpi1).